We begin with the raw amino-acid sequence, 434 residues long: Epimerase FSL3 (434 aa).

A substrate-binding site is contributed by 125–126; sequence GF. Residue glutamate 392 is the Proton acceptor of the active site.

The protein belongs to the aldose epimerase family. In terms of assembly, monomer.

It functions in the pathway secondary metabolite biosynthesis. Functionally, epimerase; part of the gene cluster that mediates the biosynthesis of fusarielins F, G and H, decaketide compounds with 5 methylations and a decaline core that act as mycoestrogens as they stimulate growth of MCF-7 breast cancer cells. The initial compound in the pathway is produced by the reducing polyketide synthase FSL1. FSL1 lacks an active enoyl reductase (ER) domain and biosynthesis of fusarielins relies on the trans-acting enoyl reductase FSL5, before it is released through hydrolysis catalyzed by the thioesterase FSL2. Fusarielins F, G, and H have a C11=C12 cis double bond and is fully reduced between C10 and C11 and between C12 and C13. FSL3 can be involved in the formation of the C11=C12 cis double bond by moving a hypothetical C10=C11 or C12=C13 trans double bond to form prefusarielin. Prefusarielin is oxygenated at C15 and C16 by the cytochrome P450 monooxygenase FSL4, resulting in fusarielin F, which subsequently is epoxidized into fusarielin G by the same enzyme. The final step in the pathway is a reduction of the carboxylic acid moiety to yield fusarielin H via a still undetermined mechanism. The polypeptide is Epimerase FSL3 (Gibberella zeae (strain ATCC MYA-4620 / CBS 123657 / FGSC 9075 / NRRL 31084 / PH-1) (Wheat head blight fungus)).